The primary structure comprises 200 residues: Adenylyl-sulfate kinase (200 aa).

35–42 contributes to the ATP binding site; that stretch reads GLPASGKS. Catalysis depends on Ser109, which acts as the Phosphoserine intermediate.

It belongs to the APS kinase family.

It catalyses the reaction adenosine 5'-phosphosulfate + ATP = 3'-phosphoadenylyl sulfate + ADP + H(+). The protein operates within sulfur metabolism; hydrogen sulfide biosynthesis; sulfite from sulfate: step 2/3. Its function is as follows. Catalyzes the synthesis of activated sulfate. In Thermodesulfovibrio yellowstonii (strain ATCC 51303 / DSM 11347 / YP87), this protein is Adenylyl-sulfate kinase.